Reading from the N-terminus, the 147-residue chain is Protein disulfide isomerase-like 5-1 (147 aa).

The signal sequence occupies residues 1 to 29 (MDLAPGRRARLLVALALVVLVALAARSGA). A Thioredoxin domain is found at 30–137 (EVITLTEETF…LKNFVSDEAE (108 aa)). Active-site nucleophile residues include C59 and C62. C59 and C62 form a disulfide bridge.

Belongs to the protein disulfide isomerase family.

Functionally, acts as a protein-folding catalyst that interacts with nascent polypeptides to catalyze the formation, isomerization, and reduction or oxidation of disulfide bonds. May play a role in storage protein biogenesis. This chain is Protein disulfide isomerase-like 5-1 (PDIL5-1), found in Oryza sativa subsp. japonica (Rice).